A 138-amino-acid chain; its full sequence is uncharacterized protein (138 aa).

S110 carries the post-translational modification Phosphoserine.

The protein resides in the cytoplasm. It localises to the nucleus. This is an uncharacterized protein from Schizosaccharomyces pombe (strain 972 / ATCC 24843) (Fission yeast).